The chain runs to 317 residues: Pantothenate kinase (317 aa).

Residue 95–102 participates in ATP binding; it reads GSVAVGKS.

Belongs to the prokaryotic pantothenate kinase family.

The protein resides in the cytoplasm. It carries out the reaction (R)-pantothenate + ATP = (R)-4'-phosphopantothenate + ADP + H(+). It functions in the pathway cofactor biosynthesis; coenzyme A biosynthesis; CoA from (R)-pantothenate: step 1/5. The protein is Pantothenate kinase of Myxococcus xanthus (strain DK1622).